A 461-amino-acid polypeptide reads, in one-letter code: Glutamate--tRNA ligase (461 aa).

Residues Pro-8–Gly-18 carry the 'HIGH' region motif. The short motif at Lys-240–Arg-244 is the 'KMSKS' region element. Lys-243 contacts ATP.

It belongs to the class-I aminoacyl-tRNA synthetase family. Glutamate--tRNA ligase type 1 subfamily. In terms of assembly, monomer.

The protein localises to the cytoplasm. The enzyme catalyses tRNA(Glu) + L-glutamate + ATP = L-glutamyl-tRNA(Glu) + AMP + diphosphate. Functionally, catalyzes the attachment of glutamate to tRNA(Glu) in a two-step reaction: glutamate is first activated by ATP to form Glu-AMP and then transferred to the acceptor end of tRNA(Glu). The polypeptide is Glutamate--tRNA ligase (Chromobacterium violaceum (strain ATCC 12472 / DSM 30191 / JCM 1249 / CCUG 213 / NBRC 12614 / NCIMB 9131 / NCTC 9757 / MK)).